A 283-amino-acid polypeptide reads, in one-letter code: Thymidylate synthase (283 aa).

A dUMP-binding site is contributed by Arg22. Cys160 (nucleophile) is an active-site residue. DUMP-binding positions include 180-183 (RSCD), Asn191, and 221-223 (HIY). Asp183 contacts (6R)-5,10-methylene-5,6,7,8-tetrahydrofolate. Residue Ser282 coordinates (6R)-5,10-methylene-5,6,7,8-tetrahydrofolate.

The protein belongs to the thymidylate synthase family. Bacterial-type ThyA subfamily. As to quaternary structure, homodimer.

It localises to the cytoplasm. It catalyses the reaction dUMP + (6R)-5,10-methylene-5,6,7,8-tetrahydrofolate = 7,8-dihydrofolate + dTMP. The protein operates within pyrimidine metabolism; dTTP biosynthesis. Functionally, catalyzes the reductive methylation of 2'-deoxyuridine-5'-monophosphate (dUMP) to 2'-deoxythymidine-5'-monophosphate (dTMP) while utilizing 5,10-methylenetetrahydrofolate (mTHF) as the methyl donor and reductant in the reaction, yielding dihydrofolate (DHF) as a by-product. This enzymatic reaction provides an intracellular de novo source of dTMP, an essential precursor for DNA biosynthesis. In Shewanella pealeana (strain ATCC 700345 / ANG-SQ1), this protein is Thymidylate synthase.